Consider the following 253-residue polypeptide: UPF0246 protein LBA1843 (253 aa).

Belongs to the UPF0246 family.

The polypeptide is UPF0246 protein LBA1843 (Lactobacillus acidophilus (strain ATCC 700396 / NCK56 / N2 / NCFM)).